A 216-amino-acid polypeptide reads, in one-letter code: Calcium-binding protein 2 (216 aa).

Residues 1–41 (MGNCAKTPWHRGSKERWQWPGSPLGGSRPSPGPRTEEQEGT) are disordered. Gly2 is lipidated: N-myristoyl glycine. Over residues 20–29 (PGSPLGGSRP) the composition is skewed to low complexity. 4 EF-hand domains span residues 74–109 (EEIEELQIAFQEFDRDRDGYIGYRELGACMRTLGYM), 125–142 (GKVDFEDFVELMGPKLLA), 148–183 (IGVRELRDAFREFDTNGDGCISVGELRAALKALLGE), and 185–216 (LSQREVDEILQDIDLNGDGLVDFEEFVRMMSR). Ca(2+)-binding residues include Asp87, Asp89, Asp91, Tyr93, and Glu98. The Ca(2+) site is built by Asp161, Asn163, Asp165, Cys167, Glu172, Asp198, Asn200, Asp202, and Glu209.

Expressed in the inner hair cells (IHCs), outer hair cells,(OHCs) and vestibular hair cells within the ear and in the retina (at protein level). Expressed in the retinal cone type 6 ON-bipolar cells and type 1 OFF-bipolar cells (at protein level). Expressed in the organ of Corti and spiral ganglion neurons in the cochlea (at protein level).

It is found in the cytoplasm. Its subcellular location is the perinuclear region. The protein resides in the cell membrane. It localises to the golgi apparatus. Its function is as follows. Required for sound encoding at inner hair cells (IHCs) synapses, likely via inhibition of the inactivation of voltage-gated calcium channel of type 1.3 (Cav1.3) in the IHCs. Required for the normal transfer of light signals through the retina. This Mus musculus (Mouse) protein is Calcium-binding protein 2 (Cabp2).